The chain runs to 330 residues: Membrane progestin receptor gamma (330 aa).

Residues 1–51 (MLSLKLPRLFSIDQIPQVFHEQGILFGYRHPQSSATACILSLFQMTNETLN) are Cytoplasmic-facing. A helical transmembrane segment spans residues 52–72 (IWTHLLPFWFFAWRFVTALYM). At 73–80 (TDIKNDSY) the chain is on the extracellular side. The chain crosses the membrane as a helical span at residues 81-101 (SWPMLVYMCTSCVYPLVSSCA). The Cytoplasmic portion of the chain corresponds to 102–113 (HTFSSMSKNARH). A helical membrane pass occupies residues 114 to 134 (ICYFLDYGAVNLFSLGSAIAY). The Extracellular segment spans residues 135–141 (SAYTFPD). A helical transmembrane segment spans residues 142–162 (ALMCTTFHDYYVALAVLNTIL). At 163–186 (STGLSCYSRFLEIQKPRLCKVIRV) the chain is on the cytoplasmic side. A helical membrane pass occupies residues 187–207 (LAFAYPYTWDSLPIFYRLFLF). Residues 208-253 (PGESAQNEATSYHQKHMIMTLLASFLYSAHLPERLAPGRFDYIGHS) lie on the Extracellular side of the membrane. The helical transmembrane segment at 254–274 (HQLFHVCVILATHMQMEAILL) threads the bilayer. The Cytoplasmic portion of the chain corresponds to 275–294 (DKTLRKEWLLATSKPFSFSQ). The helical transmembrane segment at 295–315 (IAGAILLCIIFSLSNIIYFSA) threads the bilayer. The Extracellular portion of the chain corresponds to 316–330 (ALYRIPKPELHKKET).

This sequence belongs to the ADIPOR family. Expressed in the brain, lung, kidney, colon, adrenal and lung.

It localises to the cell membrane. Plasma membrane progesterone (P4) receptor coupled to G proteins. Seems to act through a G(i) mediated pathway. May be involved in oocyte maturation. The chain is Membrane progestin receptor gamma from Homo sapiens (Human).